The chain runs to 232 residues: Orotidine 5'-phosphate decarboxylase (232 aa).

Substrate-binding positions include aspartate 11, lysine 32, 59-68, threonine 116, arginine 178, glutamine 188, glycine 208, and arginine 209; that span reads DLKLHDIPHT. The active-site Proton donor is lysine 61.

Belongs to the OMP decarboxylase family. Type 1 subfamily. As to quaternary structure, homodimer.

The catalysed reaction is orotidine 5'-phosphate + H(+) = UMP + CO2. It functions in the pathway pyrimidine metabolism; UMP biosynthesis via de novo pathway; UMP from orotate: step 2/2. Functionally, catalyzes the decarboxylation of orotidine 5'-monophosphate (OMP) to uridine 5'-monophosphate (UMP). The polypeptide is Orotidine 5'-phosphate decarboxylase (Synechococcus sp. (strain JA-3-3Ab) (Cyanobacteria bacterium Yellowstone A-Prime)).